A 212-amino-acid chain; its full sequence is MTDLSDIRREYTKGGLRRADLPQNPMQLFELWMTQARDAELSDPTAMCVATVDEHGQPYQRIVLLKRFDDTGFVFFTNLGSRKAQQIAANNKVSLHFPWHSIERQVSILGEAQPLSTAEVLKYFMTRPKDSQIAAWVSQQSSKLSARQVLEGKFFEMKAKFAKGDVPLPSFWGGYLVKPSSIEFWQGGEHRLHDRFLYTRQADEWVIDRLAP.

Substrate-binding positions include 8-11 and Lys66; that span reads RREY. FMN-binding positions include 61-66, 76-77, Arg82, Lys83, and Gln105; these read RIVLLK and FT. The substrate site is built by Tyr123, Arg127, and Ser131. Residues 140–141 and Trp185 contribute to the FMN site; that span reads QS. Residue 191 to 193 participates in substrate binding; sequence RLH. Arg195 is an FMN binding site.

Belongs to the pyridoxamine 5'-phosphate oxidase family. In terms of assembly, homodimer. Requires FMN as cofactor.

The catalysed reaction is pyridoxamine 5'-phosphate + O2 + H2O = pyridoxal 5'-phosphate + H2O2 + NH4(+). It carries out the reaction pyridoxine 5'-phosphate + O2 = pyridoxal 5'-phosphate + H2O2. Its pathway is cofactor metabolism; pyridoxal 5'-phosphate salvage; pyridoxal 5'-phosphate from pyridoxamine 5'-phosphate: step 1/1. It participates in cofactor metabolism; pyridoxal 5'-phosphate salvage; pyridoxal 5'-phosphate from pyridoxine 5'-phosphate: step 1/1. Its function is as follows. Catalyzes the oxidation of either pyridoxine 5'-phosphate (PNP) or pyridoxamine 5'-phosphate (PMP) into pyridoxal 5'-phosphate (PLP). The chain is Pyridoxine/pyridoxamine 5'-phosphate oxidase from Shewanella sp. (strain MR-7).